Reading from the N-terminus, the 563-residue chain is Arginine--tRNA ligase (563 aa).

The short motif at 120–130 (PNIAKPFHIGH) is the 'HIGH' region element.

Belongs to the class-I aminoacyl-tRNA synthetase family. Monomer.

It is found in the cytoplasm. The enzyme catalyses tRNA(Arg) + L-arginine + ATP = L-arginyl-tRNA(Arg) + AMP + diphosphate. The chain is Arginine--tRNA ligase from Clostridium botulinum (strain 657 / Type Ba4).